The primary structure comprises 257 residues: Acetylglutamate kinase (257 aa).

Substrate-binding positions include 43–44 (GG), R65, and N157. Residues 180–185 (DVSGIL) and 208–210 (IIT) each bind ATP.

Belongs to the acetylglutamate kinase family. ArgB subfamily. Homodimer.

The protein resides in the cytoplasm. The catalysed reaction is N-acetyl-L-glutamate + ATP = N-acetyl-L-glutamyl 5-phosphate + ADP. It participates in amino-acid biosynthesis; L-arginine biosynthesis; N(2)-acetyl-L-ornithine from L-glutamate: step 2/4. Its function is as follows. Catalyzes the ATP-dependent phosphorylation of N-acetyl-L-glutamate. This Salmonella schwarzengrund (strain CVM19633) protein is Acetylglutamate kinase.